A 67-amino-acid polypeptide reads, in one-letter code: Protein SlyX homolog (67 aa).

It belongs to the SlyX family.

The sequence is that of Protein SlyX homolog from Mesorhizobium japonicum (strain LMG 29417 / CECT 9101 / MAFF 303099) (Mesorhizobium loti (strain MAFF 303099)).